Reading from the N-terminus, the 421-residue chain is MKRYDTLHVWKLIKLLICKFLLFHDFGTALFTSLVKASMLGFHNWRRTYWLYLKKLRPINDTYDAPFAIGCKNVAYEASQYPRMNATFMVLARNSDLDGVLSSMNSIERRFNRHFKYPYVFLNDEPFTTEFKKAVKDATDSSIQFGVLDDELWNFPKDVDKDMIDESIAEQVGVVYANFPSYHKMCRFFSRNFYKHPLMQQYEWYWRLEPEVTFSCDISYDPFYYMDKHNKVYGYVIAIKELAKTVPNLFRYTVAHQKISNLPTTDLWSFFLDKRYETRIKKLKEEQKDQGYYVLPEPPLNRIDGQIYNLCHFWSNFEIARLDFYNSKEYNEYVDALENAGGFWTERWGDAPVHSLAVGLLLNRSQVHYFRDLGYQHSTIQHCGQEYGCNCDCPFNIPDYETKPGSCINEWASVMGGFLDE.

Glutamate 318 functions as the Nucleophile in the catalytic mechanism.

It belongs to the glycosyltransferase 15 family.

The protein localises to the cytoplasm. In terms of biological role, probable mannosyltransferase involved in O-glycosylation of cell wall and secreted proteins. This chain is O-glycoside alpha-1,2-mannosyltransferase homolog 5 (omh5), found in Schizosaccharomyces pombe (strain 972 / ATCC 24843) (Fission yeast).